The following is a 400-amino-acid chain: Protection of telomeres homolog 1 (400 aa).

This sequence belongs to the telombin family. In terms of tissue distribution, expressed in sperm and oocytes.

It localises to the nucleus. The protein resides in the nucleus envelope. It is found in the chromosome. The protein localises to the telomere. In terms of biological role, telomeric DNA-binding protein, which binds to single-stranded C-rich repeat sequences, with high specificity to the 5'-GCCTAA-3' sequence. Repeat sequence binding can be at the 5' or 3' telomeric end. May have a role in protecting the 5' end of the C-rich strand of the telomere. Acts redundantly with pot-2 to negatively regulate telomerase-mediated telomere extension. Also regulates telomere length by the telomerase-independent telomere maintenance pathway called ALT (alternative lengthening of telomeres). Through sun-1, anchors telomeres to the nuclear envelope in embryos. This Caenorhabditis elegans protein is Protection of telomeres homolog 1.